Consider the following 494-residue polypeptide: ATP synthase subunit alpha, chloroplastic (494 aa).

An ATP-binding site is contributed by 170 to 177 (GDRQTGKT).

The protein belongs to the ATPase alpha/beta chains family. F-type ATPases have 2 components, CF(1) - the catalytic core - and CF(0) - the membrane proton channel. CF(1) has five subunits: alpha(3), beta(3), gamma(1), delta(1), epsilon(1). CF(0) has four main subunits: a, b, b' and c.

It localises to the plastid. The protein localises to the chloroplast thylakoid membrane. The enzyme catalyses ATP + H2O + 4 H(+)(in) = ADP + phosphate + 5 H(+)(out). Produces ATP from ADP in the presence of a proton gradient across the membrane. The alpha chain is a regulatory subunit. The protein is ATP synthase subunit alpha, chloroplastic of Pinus thunbergii (Japanese black pine).